The chain runs to 114 residues: T cell receptor beta variable 25-1 (114 aa).

Positions 1 to 21 (MTIRLLCYVGFYFLGAGLMEA) are cleaved as a signal peptide. The 93-residue stretch at 22–114 (DIYQTPRYLV…TSQYLCASSE (93 aa)) folds into the Ig-like domain. A disulfide bond links cysteine 42 and cysteine 110. Asparagine 72 carries an N-linked (GlcNAc...) asparagine glycan.

As to quaternary structure, alpha-beta TR is a heterodimer composed of an alpha and beta chain; disulfide-linked. The alpha-beta TR is associated with the transmembrane signaling CD3 coreceptor proteins to form the TR-CD3 (TcR or TCR). The assembly of alpha-beta TR heterodimers with CD3 occurs in the endoplasmic reticulum where a single alpha-beta TR heterodimer associates with one CD3D-CD3E heterodimer, one CD3G-CD3E heterodimer and one CD247 homodimer forming a stable octameric structure. CD3D-CD3E and CD3G-CD3E heterodimers preferentially associate with TR alpha and TR beta chains, respectively. The association of the CD247 homodimer is the last step of TcR assembly in the endoplasmic reticulum and is required for transport to the cell surface.

It is found in the cell membrane. In terms of biological role, v region of the variable domain of T cell receptor (TR) beta chain that participates in the antigen recognition. Alpha-beta T cell receptors are antigen specific receptors which are essential to the immune response and are present on the cell surface of T lymphocytes. Recognize peptide-major histocompatibility (MH) (pMH) complexes that are displayed by antigen presenting cells (APC), a prerequisite for efficient T cell adaptive immunity against pathogens. Binding of alpha-beta TR to pMH complex initiates TR-CD3 clustering on the cell surface and intracellular activation of LCK that phosphorylates the ITAM motifs of CD3G, CD3D, CD3E and CD247 enabling the recruitment of ZAP70. In turn ZAP70 phosphorylates LAT, which recruits numerous signaling molecules to form the LAT signalosome. The LAT signalosome propagates signal branching to three major signaling pathways, the calcium, the mitogen-activated protein kinase (MAPK) kinase and the nuclear factor NF-kappa-B (NF-kB) pathways, leading to the mobilization of transcription factors that are critical for gene expression and essential for T cell growth and differentiation. The T cell repertoire is generated in the thymus, by V-(D)-J rearrangement. This repertoire is then shaped by intrathymic selection events to generate a peripheral T cell pool of self-MH restricted, non-autoaggressive T cells. Post-thymic interaction of alpha-beta TR with the pMH complexes shapes TR structural and functional avidity. This is T cell receptor beta variable 25-1 from Homo sapiens (Human).